The sequence spans 415 residues: MATH domain and coiled-coil domain-containing protein At2g42465 (415 aa).

Residues 6 to 130 (RKALTLTVTN…NDRFNIEIYI (125 aa)) enclose the MATH domain. Residues 244-341 (FKLEWLKAKL…LLKDTYSDLK (98 aa)) adopt a coiled-coil conformation.

In Arabidopsis thaliana (Mouse-ear cress), this protein is MATH domain and coiled-coil domain-containing protein At2g42465.